The primary structure comprises 554 residues: RecBCD enzyme subunit RecD (554 aa).

155 to 162 (GGPGTGKT) contacts ATP.

This sequence belongs to the RecD family. Heterotrimer of RecB, RecC and RecD. All subunits contribute to DNA-binding.

It catalyses the reaction Couples ATP hydrolysis with the unwinding of duplex DNA at the replication fork by translocating in the 5'-3' direction. This creates two antiparallel DNA single strands (ssDNA). The leading ssDNA polymer is the template for DNA polymerase III holoenzyme which synthesizes a continuous strand.. It carries out the reaction ATP + H2O = ADP + phosphate + H(+). Functionally, a helicase/nuclease that prepares dsDNA breaks (DSB) for recombinational DNA repair. Binds to DSBs and unwinds DNA via a highly rapid and processive ATP-dependent bidirectional helicase activity. Holoenzyme degrades any linearized DNA that is unable to undergo homologous recombination. In the holoenzyme this subunit has ssDNA-dependent ATPase and 5'-3' helicase activity. When added to pre-assembled RecBC greatly stimulates nuclease activity and augments holoenzyme processivity. Unlike the case in E.coli, suppresses RecA-dependent homologous recombination, is instead required for single-strand annealing pathway repair of DSB. This Mycolicibacterium smegmatis (strain ATCC 700084 / mc(2)155) (Mycobacterium smegmatis) protein is RecBCD enzyme subunit RecD.